The chain runs to 213 residues: Orotidine 5'-phosphate decarboxylase (213 aa).

Residues Asp-6, Lys-25, 52 to 61 (DLKLADIDNT), Ser-109, 158 to 168 (PGVGAQGAMIG), Gly-181, and Arg-182 each bind substrate. Residue Lys-54 is the Proton donor of the active site.

This sequence belongs to the OMP decarboxylase family. Type 1 subfamily. In terms of assembly, homodimer.

The enzyme catalyses orotidine 5'-phosphate + H(+) = UMP + CO2. Its pathway is pyrimidine metabolism; UMP biosynthesis via de novo pathway; UMP from orotate: step 2/2. In terms of biological role, catalyzes the decarboxylation of orotidine 5'-monophosphate (OMP) to uridine 5'-monophosphate (UMP). The protein is Orotidine 5'-phosphate decarboxylase of Sulfurisphaera tokodaii (strain DSM 16993 / JCM 10545 / NBRC 100140 / 7) (Sulfolobus tokodaii).